The following is a 274-amino-acid chain: Beta-lactamase OXA-9 (274 aa).

The signal sequence occupies residues 1-24 (MKKILLLHMLVFVSATLPISSVAS). Residue Ser-58 is the Acyl-ester intermediate of the active site. Lys-61 carries the N6-carboxylysine modification. A substrate-binding site is contributed by 206 to 208 (KSG).

It belongs to the class-D beta-lactamase family.

It catalyses the reaction a beta-lactam + H2O = a substituted beta-amino acid. Its function is as follows. Oxacillin-hydrolyzing beta-lactamase. Confers resistance to beta-lactam antibiotics but at a significantly lower level than the TEM bla gene product. This Klebsiella aerogenes (Enterobacter aerogenes) protein is Beta-lactamase OXA-9 (bla).